The sequence spans 569 residues: Estrogen receptor (569 aa).

The tract at residues 1 to 151 (MYPKEEHSAG…GFDSGKETRF (151 aa)) is modulating. The segment covering 28 to 37 (PTQTFGTSSP) has biased composition (polar residues). Residues 28-65 (PTQTFGTSSPAEPASVGYYPAPPDPHEEHLQTLGGGSS) form a disordered region. 2 consecutive NR C4-type zinc fingers follow at residues 152–172 (CAVC…CEGC) and 188–212 (CPAT…LRKC). The segment at residues 152-217 (CAVCSDYASG…RLRKCYEVGM (66 aa)) is a DNA-binding region (nuclear receptor). Positions 218-278 (MKGGIRKDRG…SGGVVSTLCM (61 aa)) are hinge. The segment at 223–271 (RKDRGGRSVRRERRRSSNEDRDKSSSDQCSRAGVRTTGPQDKRKKRSGG) is disordered. A compositionally biased stretch (basic and acidic residues) spans 237–247 (RSSNEDRDKSS). Residues 279–515 (SPDQVLLLLL…DLLLEMLDAQ (237 aa)) enclose the NR LBD domain. The span at 523-532 (VQRVWSQSEK) shows a compositional bias: polar residues. The tract at residues 523–569 (VQRVWSQSEKNPPSTPTTSSSSSNNSPRGGAAAIQSNGACHSHSPDP) is disordered. The segment covering 538 to 549 (PTTSSSSSNNSP) has biased composition (low complexity).

The protein belongs to the nuclear hormone receptor family. NR3 subfamily. Binds DNA as a homodimer. Can form a heterodimer with ER-beta.

The protein resides in the nucleus. Functionally, the steroid hormones and their receptors are involved in the regulation of eukaryotic gene expression and affect cellular proliferation and differentiation in target tissues. This is Estrogen receptor (esr1) from Danio rerio (Zebrafish).